A 514-amino-acid polypeptide reads, in one-letter code: Threonine synthase (514 aa).

Lysine 117 is subject to N6-(pyridoxal phosphate)lysine. Residues glycine 270, asparagine 271, phenylalanine 272, and aspartate 274 each coordinate pyridoxal 5'-phosphate. A phosphoserine mark is found at serine 319 and serine 321. Position 449 (threonine 449) interacts with pyridoxal 5'-phosphate.

It belongs to the threonine synthase family. Requires pyridoxal 5'-phosphate as cofactor.

It carries out the reaction O-phospho-L-homoserine + H2O = L-threonine + phosphate. It functions in the pathway amino-acid biosynthesis; L-threonine biosynthesis; L-threonine from L-aspartate: step 5/5. Its function is as follows. Catalyzes the gamma-elimination of phosphate from L-phosphohomoserine and the beta-addition of water to produce L-threonine. This is Threonine synthase (thrc) from Schizosaccharomyces pombe (strain 972 / ATCC 24843) (Fission yeast).